The chain runs to 282 residues: U1 small nuclear ribonucleoprotein A (282 aa).

Alanine 2 bears the N-acetylalanine mark. The 80-residue stretch at 10–89 (HTIYINNLNE…KPMRIQYAKT (80 aa)) folds into the RRM 1 domain. N6-acetyllysine is present on lysine 60. A disordered region spans residues 100–132 (TFVERDRKREKRKPKSQETPATKKAVQGGGATP). Residue threonine 131 is modified to Phosphothreonine. Arginine 152 carries the post-translational modification Omega-N-methylarginine. An RRM 2 domain is found at 208–282 (HILFLTNLPE…NAMKISFAKK (75 aa)).

The protein belongs to the RRM U1 A/B'' family. In terms of assembly, U1 snRNP is composed of the 7 core Sm proteins SNRPB, SNRPD1, SNRPD2, SNRPD3, SNRPE, SNRPF and SNRPG that assemble in a heptameric protein ring on the Sm site of the small nuclear RNA to form the core snRNP, and at least three U1 snRNP-specific proteins SNRNP70/U1-70K, SNRPA/U1-A and SNRPC/U1-C. Interacts with SFPQ; component of a snRNP-free complex with SFPQ. Interacts with IVNS1ABP (via BACK domain); the interaction is indirect.

It is found in the nucleus. In terms of biological role, component of the spliceosomal U1 snRNP, which is essential for recognition of the pre-mRNA 5' splice-site and the subsequent assembly of the spliceosome. U1 snRNP is the first snRNP to interact with pre-mRNA. This interaction is required for the subsequent binding of U2 snRNP and the U4/U6/U5 tri-snRNP. SNRPA binds stem loop II of U1 snRNA. In a snRNP-free form (SF-A) may be involved in coupled pre-mRNA splicing and polyadenylation process. May bind preferentially to the 5'-UGCAC-3' motif on RNAs. This chain is U1 small nuclear ribonucleoprotein A (SNRPA), found in Homo sapiens (Human).